A 103-amino-acid polypeptide reads, in one-letter code: Large ribosomal subunit protein eL14 (103 aa).

This sequence belongs to the eukaryotic ribosomal protein eL14 family.

The polypeptide is Large ribosomal subunit protein eL14 (Pyrobaculum arsenaticum (strain DSM 13514 / JCM 11321 / PZ6)).